Consider the following 109-residue polypeptide: MSSFIDITNVISSHVEANLPAVSAENVQSLANGAGIAYLGKYIGTGITMLAAGAVGLMQGFSTANAVQAVARNPEAQPKILSTMIVGLALAEAVAIYALIVSILIIFVA.

2 helical membrane passes run 42-62 (YIGT…QGFS) and 88-108 (LALA…IIFV).

Belongs to the ATPase C chain family. In terms of assembly, F-type ATPases have 2 components, F(1) - the catalytic core - and F(0) - the membrane proton channel. F(1) has five subunits: alpha(3), beta(3), gamma(1), delta(1), epsilon(1). F(0) has three main subunits: a(1), b(2) and c(10-14). The alpha and beta chains form an alternating ring which encloses part of the gamma chain. F(1) is attached to F(0) by a central stalk formed by the gamma and epsilon chains, while a peripheral stalk is formed by the delta and b chains.

It is found in the cell membrane. Its function is as follows. F(1)F(0) ATP synthase produces ATP from ADP in the presence of a proton or sodium gradient. F-type ATPases consist of two structural domains, F(1) containing the extramembraneous catalytic core and F(0) containing the membrane proton channel, linked together by a central stalk and a peripheral stalk. During catalysis, ATP synthesis in the catalytic domain of F(1) is coupled via a rotary mechanism of the central stalk subunits to proton translocation. Key component of the F(0) channel; it plays a direct role in translocation across the membrane. A homomeric c-ring of between 10-14 subunits forms the central stalk rotor element with the F(1) delta and epsilon subunits. In Ureaplasma urealyticum serovar 10 (strain ATCC 33699 / Western), this protein is ATP synthase subunit c.